We begin with the raw amino-acid sequence, 87 residues long: Small ribosomal subunit protein bS20 (87 aa).

It belongs to the bacterial ribosomal protein bS20 family.

In terms of biological role, binds directly to 16S ribosomal RNA. The protein is Small ribosomal subunit protein bS20 of Shigella flexneri serotype 5b (strain 8401).